The primary structure comprises 681 residues: Kojibiose hydrolase (681 aa).

Residues 1 to 23 (MKKYIFNHVFFFLMLCGSNYLYS) form the signal peptide. Residues R74, W343, D344, W391, E392, T407, E472, W473, K538, Q539, and D573 each contribute to the beta-D-glucose site. E472 (proton donor) is an active-site residue. The active-site Proton acceptor is the E616.

This sequence belongs to the glycosyl hydrolase 65 family. In terms of assembly, homohexamer; dimer of trimers.

The protein localises to the periplasm. It carries out the reaction kojibiose + H2O = beta-D-glucose + D-glucose. Its function is as follows. Glycosidase that specifically hydrolyzes kojibiose to beta-glucose and glucose. Also hydrolyzes, with lower catalytic efficiency, longer kojioligosaccharides (from kojitriose to kojipentaose) and shorter oligosaccharides produced by the degradation of dextran-containing alpha-1,2 branches. Probably acts on alpha-(1-&gt;2)-glucosyl isomaltooligosaccharides. Shows weak activity with nigerose but has no activity toward p-nitrophenyl alpha-glucopyranoside, which is a general substrate of exo-acting alpha-glucoside hydrolases. Has a strict specificity for alpha-1,2-glucosidic linkages. Catalyzes the hydrolytic reaction via an anomer-inverting mechanism. This Flavobacterium johnsoniae (strain ATCC 17061 / DSM 2064 / JCM 8514 / BCRC 14874 / CCUG 350202 / NBRC 14942 / NCIMB 11054 / UW101) (Cytophaga johnsonae) protein is Kojibiose hydrolase.